A 171-amino-acid chain; its full sequence is Protein FAM209A (171 aa).

Residues 1–19 (MWTLKSSLVLLLCLTCSYA) form the signal peptide. Over 20–52 (FMFSSLRQKTSEPQGKVQYGEHFRIRQNLPEHT) the chain is Extracellular. The helical transmembrane segment at 53-73 (QGWLGSKWLWLLFVVVPFVIL) threads the bilayer. The Cytoplasmic portion of the chain corresponds to 74–171 (QCQRDSEKNK…CEIWGEESSS (98 aa)). The tract at residues 81 to 107 (KNKEQSPPGLRGGQLHSPLKKKRNASP) is disordered. Residues 114 to 139 (NTLMELEVELMKFVSKVRNLKRAMAT) adopt a coiled-coil conformation.

It belongs to the FAM209 family. Interacts with DPY19L2. Interacts with CYLC1; the interaction may be relevant for proper acrosome attachment to the nuclear envelope.

It localises to the nucleus inner membrane. In terms of biological role, may play a role in sperm acrosome biogenesis. This is Protein FAM209A from Homo sapiens (Human).